Reading from the N-terminus, the 41-residue chain is uncharacterized protein (41 aa).

Its subcellular location is the plastid. It is found in the chloroplast. This is an uncharacterized protein from Trieres chinensis (Marine centric diatom).